A 287-amino-acid chain; its full sequence is Phosphatidylglycerol--prolipoprotein diacylglyceryl transferase (287 aa).

Transmembrane regions (helical) follow at residues 26 to 46, 71 to 91, 106 to 126, and 132 to 152; these read VAIRWYGLAYVTGILIGWWLA, FLVWAAIGIVLGGRIGYILFY, IWRGGMSFHGGLTGATLAMIV, and GLPVWMLFDLVACVAPIGLFF. Arg154 lines the a 1,2-diacyl-sn-glycero-3-phospho-(1'-sn-glycerol) pocket. 3 consecutive transmembrane segments (helical) span residues 187–207, 217–237, and 251–271; these read SQLYEAALEGLVLFVLLQVLA, GVISGVFICGYALARIFVEFF, and WLTMGMLLSLPMLALGLWAIW.

This sequence belongs to the Lgt family.

The protein localises to the cell inner membrane. The catalysed reaction is L-cysteinyl-[prolipoprotein] + a 1,2-diacyl-sn-glycero-3-phospho-(1'-sn-glycerol) = an S-1,2-diacyl-sn-glyceryl-L-cysteinyl-[prolipoprotein] + sn-glycerol 1-phosphate + H(+). The protein operates within protein modification; lipoprotein biosynthesis (diacylglyceryl transfer). Functionally, catalyzes the transfer of the diacylglyceryl group from phosphatidylglycerol to the sulfhydryl group of the N-terminal cysteine of a prolipoprotein, the first step in the formation of mature lipoproteins. This is Phosphatidylglycerol--prolipoprotein diacylglyceryl transferase from Allorhizobium ampelinum (strain ATCC BAA-846 / DSM 112012 / S4) (Agrobacterium vitis (strain S4)).